The primary structure comprises 360 residues: Photosystem II protein D1 1 (360 aa).

Helical transmembrane passes span 29-46 (YIGW…TATT), 118-133 (HFLI…QWEL), and 142-156 (WICV…AATA). Histidine 118 serves as a coordination point for chlorophyll a. Residue tyrosine 126 participates in pheophytin a binding. [CaMn4O5] cluster is bound by residues aspartate 170 and glutamate 189. The chain crosses the membrane as a helical span at residues 197–218 (FHMLGVAGVFGGALFAAMHGSL). Residue histidine 198 participates in chlorophyll a binding. Residues histidine 215 and 264–265 (SF) contribute to the a quinone site. A Fe cation-binding site is contributed by histidine 215. Histidine 272 contributes to the Fe cation binding site. The helical transmembrane segment at 274–288 (FLGAWPVVGIWFAAL) threads the bilayer. The [CaMn4O5] cluster site is built by histidine 332, glutamate 333, aspartate 342, and alanine 344. Residues 345 to 360 (SGDAQMVALNAPAIEG) constitute a propeptide that is removed on maturation.

It belongs to the reaction center PufL/M/PsbA/D family. As to quaternary structure, PSII is composed of 1 copy each of membrane proteins PsbA, PsbB, PsbC, PsbD, PsbE, PsbF, PsbH, PsbI, PsbJ, PsbK, PsbL, PsbM, PsbT, PsbX, PsbY, PsbZ, Psb30/Ycf12, peripheral proteins PsbO, CyanoQ (PsbQ), PsbU, PsbV and a large number of cofactors. It forms dimeric complexes. The cofactor is The D1/D2 heterodimer binds P680, chlorophylls that are the primary electron donor of PSII, and subsequent electron acceptors. It shares a non-heme iron and each subunit binds pheophytin, quinone, additional chlorophylls, carotenoids and lipids. D1 provides most of the ligands for the Mn4-Ca-O5 cluster of the oxygen-evolving complex (OEC). There is also a Cl(-1) ion associated with D1 and D2, which is required for oxygen evolution. The PSII complex binds additional chlorophylls, carotenoids and specific lipids.. C-terminally processed by CtpA; processing is essential to allow assembly of the oxygen-evolving complex and photosynthetic growth. In terms of processing, tyr-161 forms a radical intermediate that is referred to as redox-active TyrZ, YZ or Y-Z. Post-translationally, C-terminally processed by CtpA; processing is essential to allow assembly of the oxygen-evolving complex and thus photosynthetic growth.

The protein resides in the cellular thylakoid membrane. It carries out the reaction 2 a plastoquinone + 4 hnu + 2 H2O = 2 a plastoquinol + O2. Photosystem II (PSII) is a light-driven water:plastoquinone oxidoreductase that uses light energy to abstract electrons from H(2)O, generating O(2) and a proton gradient subsequently used for ATP formation. It consists of a core antenna complex that captures photons, and an electron transfer chain that converts photonic excitation into a charge separation. The D1/D2 (PsbA/PsbD) reaction center heterodimer binds P680, the primary electron donor of PSII as well as several subsequent electron acceptors. The protein is Photosystem II protein D1 1 of Synechocystis sp. (strain ATCC 27184 / PCC 6803 / Kazusa).